The sequence spans 334 residues: Glyceraldehyde-3-phosphate dehydrogenase (334 aa).

Residues arginine 11–isoleucine 12, aspartate 33, and serine 119 contribute to the NAD(+) site. Residues serine 149–threonine 151 and threonine 180 contribute to the D-glyceraldehyde 3-phosphate site. Catalysis depends on cysteine 150, which acts as the Nucleophile. Position 181 (asparagine 181) interacts with NAD(+). Residues arginine 197, threonine 210 to glycine 211, and arginine 233 contribute to the D-glyceraldehyde 3-phosphate site. An NAD(+)-binding site is contributed by asparagine 314.

The protein belongs to the glyceraldehyde-3-phosphate dehydrogenase family. In terms of assembly, homotetramer.

Its subcellular location is the cytoplasm. The enzyme catalyses D-glyceraldehyde 3-phosphate + phosphate + NAD(+) = (2R)-3-phospho-glyceroyl phosphate + NADH + H(+). Its pathway is carbohydrate degradation; glycolysis; pyruvate from D-glyceraldehyde 3-phosphate: step 1/5. Its function is as follows. Catalyzes the oxidative phosphorylation of glyceraldehyde 3-phosphate (G3P) to 1,3-bisphosphoglycerate (BPG) using the cofactor NAD. The first reaction step involves the formation of a hemiacetal intermediate between G3P and a cysteine residue, and this hemiacetal intermediate is then oxidized to a thioester, with concomitant reduction of NAD to NADH. The reduced NADH is then exchanged with the second NAD, and the thioester is attacked by a nucleophilic inorganic phosphate to produce BPG. This is Glyceraldehyde-3-phosphate dehydrogenase (gap) from Clostridium pasteurianum.